The following is a 217-amino-acid chain: Adenylate kinase (217 aa).

Glycine 10 to threonine 15 is an ATP binding site. Residues serine 30 to valine 59 form an NMP region. AMP contacts are provided by residues threonine 31, arginine 36, glycine 57–valine 59, glycine 85–arginine 88, and glutamine 92. Positions glycine 122–aspartate 159 are LID. ATP is bound by residues arginine 123 and isoleucine 132–tyrosine 133. AMP contacts are provided by arginine 156 and arginine 167. Residue glycine 203 coordinates ATP.

It belongs to the adenylate kinase family. In terms of assembly, monomer.

The protein resides in the cytoplasm. It catalyses the reaction AMP + ATP = 2 ADP. Its pathway is purine metabolism; AMP biosynthesis via salvage pathway; AMP from ADP: step 1/1. Functionally, catalyzes the reversible transfer of the terminal phosphate group between ATP and AMP. Plays an important role in cellular energy homeostasis and in adenine nucleotide metabolism. The polypeptide is Adenylate kinase (Marinobacter nauticus (strain ATCC 700491 / DSM 11845 / VT8) (Marinobacter aquaeolei)).